The chain runs to 776 residues: Kinesin-like protein KIN-8A (776 aa).

2 disordered regions span residues 1–31 (MPVS…RGGA) and 80–135 (VGEV…KSSH). Over residues 7-26 (ASAAGGQPWSSAAPAPASAP) the composition is skewed to low complexity. A compositionally biased stretch (pro residues) spans 123–132 (PPPPPAPPPK). Positions 205 to 534 (RIMVFVRLRP…LHWADRAKEI (330 aa)) constitute a Kinesin motor domain. Residue 297–304 (GATGAGKT) coordinates ATP. Residues 554–592 (TDQAKLVLELQKENSELRQQLARQQQKLLTVQAQTLASN) are a coiled coil. The interval 590–611 (ASNASPQQSPAPSAQISTPCST) is disordered. Low complexity predominate over residues 593–604 (ASPQQSPAPSAQ). A coiled-coil region spans residues 634 to 671 (AAENAQVRDLQRKVKAMEAEIEKMKKEHLLQLKQKDEF).

The protein belongs to the TRAFAC class myosin-kinesin ATPase superfamily. Kinesin family. KIN-8 subfamily.

In Oryza sativa subsp. japonica (Rice), this protein is Kinesin-like protein KIN-8A.